The sequence spans 1451 residues: Dicer-like protein 2 (1451 aa).

A disordered region spans residues 34 to 53 (YDGHLSEEDSPGGKPRPKEQ). A Helicase ATP-binding domain is found at 70 to 247 (MLEASLKENI…LKRLESTLDA (178 aa)). 83–90 (MDTGSGKT) is an ATP binding site. The DEAH box motif lies at 190 to 193 (DEAH). In terms of domain architecture, Helicase C-terminal spans 412–582 (KVQRIIEVLL…RLEAIENSEA (171 aa)). The 102-residue stretch at 603–704 (AKSHLQHFVS…LPLRDRLELE (102 aa)) folds into the Dicer dsRNA-binding fold domain. RNase III domains lie at 968 to 1111 (AAEL…VDGG) and 1153 to 1351 (LQLL…VDAG). Glutamate 1192 serves as a coordination point for Mg(2+). Residues 1253–1272 (EGDSDSKSSGDSTSDKASPR) are disordered. Aspartate 1337 and glutamate 1340 together coordinate Mg(2+).

It belongs to the helicase family. Dicer subfamily. The cofactor is Mg(2+). It depends on Mn(2+) as a cofactor.

In terms of biological role, dicer-like endonuclease involved in cleaving double-stranded RNA in the RNA interference (RNAi) pathway. Produces 21 to 25 bp dsRNAs (siRNAs) which target the selective destruction of homologous RNAs leading to sequence-specific suppression of gene expression, called post-transcriptional gene silencing (PTGS). Part of a broad host defense, DCL-2 is involved in antiviral defense against mycoviruses like the hypovirus CHV1-EP713 and the reovirus MyRV1-Cp9B21. This chain is Dicer-like protein 2 (DCL-2), found in Cryphonectria parasitica (Chestnut blight fungus).